The primary structure comprises 259 residues: MDAWVRFSAQSQARERLCRAAQYACSLLGHVLQRHGASPELQKQIRQLESHLSLGRKLLRLGNSADALESAKRAVHLSDVVLRFCITVSHLNRALYFACDNVLWAGKSGLAPRVDQEKWAQRSFRYYLFSLIMNLSRDAYEIRLLMEQESSACSRRLKGSGGGVPGGSETGGLGGPGTPGGHLPQLALKLRLQVLLLARVLRGHPPLLLDVVRNACDLFIPLDKLGLWRCGPGIVGLCGLVSSILSILTLIYPWLRLKP.

An N6-acetyllysine modification is found at Lys-43. Residues 211 to 259 (VVRNACDLFIPLDKLGLWRCGPGIVGLCGLVSSILSILTLIYPWLRLKP) are interaction with PEX19, PEX11G and FIS1 and peroxisome targeting. Residues 234 to 254 (IVGLCGLVSSILSILTLIYPW) traverse the membrane as a helical segment.

It belongs to the peroxin-11 family. Homodimer. Heterodimer with PEX11G. Interacts with PEX19. Interacts with FIS1.

Its subcellular location is the peroxisome membrane. Functionally, involved in peroxisomal proliferation. May regulate peroxisome division by recruiting the dynamin-related GTPase DNM1L to the peroxisomal membrane. Promotes membrane protrusion and elongation on the peroxisomal surface. This chain is Peroxisomal membrane protein 11B (PEX11B), found in Pongo abelii (Sumatran orangutan).